We begin with the raw amino-acid sequence, 776 residues long: Protein translocase subunit SecA 2 (776 aa).

ATP-binding positions include Gln-80, 98–102 (GEGKT), and Asp-486.

Belongs to the SecA family. In terms of assembly, monomer and homodimer. Part of the essential Sec protein translocation apparatus which comprises SecA, SecYEG and auxiliary proteins SecDF. Other proteins may also be involved.

Its subcellular location is the cell membrane. The protein localises to the cytoplasm. It catalyses the reaction ATP + H2O + cellular proteinSide 1 = ADP + phosphate + cellular proteinSide 2.. Its function is as follows. Part of the Sec protein translocase complex. Interacts with the SecYEG preprotein conducting channel. Has a central role in coupling the hydrolysis of ATP to the transfer of proteins into and across the cell membrane, serving as an ATP-driven molecular motor driving the stepwise translocation of polypeptide chains across the membrane. In Listeria monocytogenes serotype 4b (strain F2365), this protein is Protein translocase subunit SecA 2.